We begin with the raw amino-acid sequence, 337 residues long: Thiazole synthase (337 aa).

The disordered stretch occupies residues 1–41; it reads MSQHPLRPAGSRPGDSPPDGSCPDGLAGGGSAVGGGGGGEA. Over residues 10–25 the composition is skewed to low complexity; it reads GSRPGDSPPDGSCPDG. Over residues 26–41 the composition is skewed to gly residues; it reads LAGGGSAVGGGGGGEA. The active-site Schiff-base intermediate with DXP is K144. 1-deoxy-D-xylulose 5-phosphate is bound by residues G205, 231-232, and 253-254; these read AG and NT. The interval 302-337 is disordered; that stretch reads FLGAHPSPASHPSPASPVPSVSRATSPAAVVGEASR. The span at 319-337 shows a compositional bias: low complexity; it reads VPSVSRATSPAAVVGEASR.

Belongs to the ThiG family. Homotetramer. Forms heterodimers with either ThiH or ThiS.

The protein localises to the cytoplasm. It carries out the reaction [ThiS sulfur-carrier protein]-C-terminal-Gly-aminoethanethioate + 2-iminoacetate + 1-deoxy-D-xylulose 5-phosphate = [ThiS sulfur-carrier protein]-C-terminal Gly-Gly + 2-[(2R,5Z)-2-carboxy-4-methylthiazol-5(2H)-ylidene]ethyl phosphate + 2 H2O + H(+). The protein operates within cofactor biosynthesis; thiamine diphosphate biosynthesis. Its function is as follows. Catalyzes the rearrangement of 1-deoxy-D-xylulose 5-phosphate (DXP) to produce the thiazole phosphate moiety of thiamine. Sulfur is provided by the thiocarboxylate moiety of the carrier protein ThiS. In vitro, sulfur can be provided by H(2)S. The protein is Thiazole synthase of Frankia casuarinae (strain DSM 45818 / CECT 9043 / HFP020203 / CcI3).